The sequence spans 258 residues: Imidazole glycerol phosphate synthase subunit HisF (258 aa).

Residues Asp11 and Asp130 contribute to the active site.

Belongs to the HisA/HisF family. Heterodimer of HisH and HisF.

The protein resides in the cytoplasm. The catalysed reaction is 5-[(5-phospho-1-deoxy-D-ribulos-1-ylimino)methylamino]-1-(5-phospho-beta-D-ribosyl)imidazole-4-carboxamide + L-glutamine = D-erythro-1-(imidazol-4-yl)glycerol 3-phosphate + 5-amino-1-(5-phospho-beta-D-ribosyl)imidazole-4-carboxamide + L-glutamate + H(+). The protein operates within amino-acid biosynthesis; L-histidine biosynthesis; L-histidine from 5-phospho-alpha-D-ribose 1-diphosphate: step 5/9. Its function is as follows. IGPS catalyzes the conversion of PRFAR and glutamine to IGP, AICAR and glutamate. The HisF subunit catalyzes the cyclization activity that produces IGP and AICAR from PRFAR using the ammonia provided by the HisH subunit. The chain is Imidazole glycerol phosphate synthase subunit HisF from Prochlorococcus marinus (strain MIT 9211).